The chain runs to 843 residues: Protein P (843 aa).

A terminal protein domain (TP) region spans residues 1–177 (MPLSYPHFRK…FCGSPYSWEQ (177 aa)). The spacer stretch occupies residues 178-346 (ELQHGSTSLN…YCLSHIINLL (169 aa)). 2 disordered regions span residues 228–259 (KQGQ…GVEP) and 283–314 (EKAN…SVGS). The span at 239–249 (RSGRLRSRVHT) shows a compositional bias: basic residues. Positions 347–690 (EDWGPCYEHG…YMNLYPVARQ (344 aa)) are polymerase/reverse transcriptase domain (RT). The Reverse transcriptase domain occupies 357–600 (QHYIRTPRTP…YSLHFMGYVI (244 aa)). Mg(2+) contacts are provided by Asp429, Asp551, and Asp552.

The protein belongs to the hepadnaviridae P protein family.

The enzyme catalyses DNA(n) + a 2'-deoxyribonucleoside 5'-triphosphate = DNA(n+1) + diphosphate. It catalyses the reaction Endonucleolytic cleavage to 5'-phosphomonoester.. Activated by host HSP70 and HSP40 in vitro to be able to bind the epsilon loop of the pgRNA. Because deletion of the RNase H region renders the protein partly chaperone-independent, the chaperones may be needed indirectly to relieve occlusion of the RNA-binding site by this domain. Inhibited by several reverse-transcriptase inhibitors: Lamivudine, Adefovir and Entecavir. Its function is as follows. Multifunctional enzyme that converts the viral RNA genome into dsDNA in viral cytoplasmic capsids. This enzyme displays a DNA polymerase activity that can copy either DNA or RNA templates, and a ribonuclease H (RNase H) activity that cleaves the RNA strand of RNA-DNA heteroduplexes in a partially processive 3'- to 5'-endonucleasic mode. Neo-synthesized pregenomic RNA (pgRNA) are encapsidated together with the P protein, and reverse-transcribed inside the nucleocapsid. Initiation of reverse-transcription occurs first by binding the epsilon loop on the pgRNA genome, and is initiated by protein priming, thereby the 5'-end of (-)DNA is covalently linked to P protein. Partial (+)DNA is synthesized from the (-)DNA template and generates the relaxed circular DNA (RC-DNA) genome. After budding and infection, the RC-DNA migrates in the nucleus, and is converted into a plasmid-like covalently closed circular DNA (cccDNA). The activity of P protein does not seem to be necessary for cccDNA generation, and is presumably released from (+)DNA by host nuclear DNA repair machinery. In Homo sapiens (Human), this protein is Protein P.